A 236-amino-acid polypeptide reads, in one-letter code: uncharacterized protein (236 aa).

The N-terminal stretch at 1-29 (MKGGDKMKKLILLMLLLPISLIGCTDEES) is a signal peptide.

This is an uncharacterized protein from Archaeoglobus fulgidus (strain ATCC 49558 / DSM 4304 / JCM 9628 / NBRC 100126 / VC-16).